The following is a 185-amino-acid chain: ATP-dependent protease subunit HslV (185 aa).

T14 is a catalytic residue. Na(+) contacts are provided by A168, C171, and T174.

The protein belongs to the peptidase T1B family. HslV subfamily. As to quaternary structure, a double ring-shaped homohexamer of HslV is capped on each side by a ring-shaped HslU homohexamer. The assembly of the HslU/HslV complex is dependent on binding of ATP.

Its subcellular location is the cytoplasm. The catalysed reaction is ATP-dependent cleavage of peptide bonds with broad specificity.. Its activity is regulated as follows. Allosterically activated by HslU binding. Protease subunit of a proteasome-like degradation complex believed to be a general protein degrading machinery. This chain is ATP-dependent protease subunit HslV, found in Hyphomonas neptunium (strain ATCC 15444).